A 157-amino-acid polypeptide reads, in one-letter code: Secreted effector protein See1 (157 aa).

Positions 1 to 21 (MLFTTFVSLLLVILCLVHVSA) are cleaved as a signal peptide. Positions 124-157 (SYRYGDSHGNSREAEYSVADHQSASGEYKFGPTT) are disordered. The span at 128-138 (GDSHGNSREAE) shows a compositional bias: basic and acidic residues.

As to quaternary structure, interacts with a maize homolog of SGT1, a factor acting in cell cycle progression in yeast Saccharomyces cerevisiae and an important component of plant and human innate immunity.

It localises to the secreted. The protein localises to the host cytoplasm. It is found in the host nucleus. Its function is as follows. Effector protein involved in the induction of tumors in infected plant tissues by the fungus. Required for the reactivation of plant DNA synthesis, which is crucial for tumor progression in leaf cells. Interferes with the MAPK-triggered phosphorylation of maize SGT1 at a monocot-specific phosphorylation site, resulting in both modulation of immune responses and reactivation of DNA synthesis during leaf tumor formation. In Mycosarcoma maydis (Corn smut fungus), this protein is Secreted effector protein See1.